Consider the following 410-residue polypeptide: Elongation factor Tu (410 aa).

Residues 10–214 (KPHVNIGTIG…EVDAYIPTPE (205 aa)) enclose the tr-type G domain. A G1 region spans residues 19-26 (GHVDHGKT). 19-26 (GHVDHGKT) serves as a coordination point for GTP. Threonine 26 contacts Mg(2+). The tract at residues 60–64 (GITIN) is G2. The tract at residues 81–84 (DCPG) is G3. GTP contacts are provided by residues 81 to 85 (DCPGH) and 136 to 139 (NKAD). The G4 stretch occupies residues 136-139 (NKAD). The G5 stretch occupies residues 174–176 (SAL).

Belongs to the TRAFAC class translation factor GTPase superfamily. Classic translation factor GTPase family. EF-Tu/EF-1A subfamily. Monomer.

The protein localises to the cytoplasm. It catalyses the reaction GTP + H2O = GDP + phosphate + H(+). In terms of biological role, GTP hydrolase that promotes the GTP-dependent binding of aminoacyl-tRNA to the A-site of ribosomes during protein biosynthesis. This chain is Elongation factor Tu, found in Arthrospira platensis (Spirulina platensis).